The primary structure comprises 331 residues: Adenine deaminase (331 aa).

3 residues coordinate Zn(2+): His-17, His-19, and His-197. The active-site Proton donor is the Glu-200. Zn(2+) is bound at residue Asp-278. Residue Asp-279 coordinates substrate.

This sequence belongs to the metallo-dependent hydrolases superfamily. Adenosine and AMP deaminases family. Adenine deaminase type 2 subfamily. Zn(2+) serves as cofactor.

The catalysed reaction is adenine + H2O + H(+) = hypoxanthine + NH4(+). In terms of biological role, catalyzes the hydrolytic deamination of adenine to hypoxanthine. Plays an important role in the purine salvage pathway and in nitrogen catabolism. This Wolinella succinogenes (strain ATCC 29543 / DSM 1740 / CCUG 13145 / JCM 31913 / LMG 7466 / NCTC 11488 / FDC 602W) (Vibrio succinogenes) protein is Adenine deaminase.